A 240-amino-acid chain; its full sequence is 1-(5-phosphoribosyl)-5-[(5-phosphoribosylamino)methylideneamino] imidazole-4-carboxamide isomerase (240 aa).

The Proton acceptor role is filled by aspartate 10. Aspartate 132 (proton donor) is an active-site residue.

It belongs to the HisA/HisF family.

It is found in the cytoplasm. It carries out the reaction 1-(5-phospho-beta-D-ribosyl)-5-[(5-phospho-beta-D-ribosylamino)methylideneamino]imidazole-4-carboxamide = 5-[(5-phospho-1-deoxy-D-ribulos-1-ylimino)methylamino]-1-(5-phospho-beta-D-ribosyl)imidazole-4-carboxamide. Its pathway is amino-acid biosynthesis; L-histidine biosynthesis; L-histidine from 5-phospho-alpha-D-ribose 1-diphosphate: step 4/9. This Methanocella arvoryzae (strain DSM 22066 / NBRC 105507 / MRE50) protein is 1-(5-phosphoribosyl)-5-[(5-phosphoribosylamino)methylideneamino] imidazole-4-carboxamide isomerase.